A 116-amino-acid polypeptide reads, in one-letter code: Large ribosomal subunit protein bL17 (116 aa).

This sequence belongs to the bacterial ribosomal protein bL17 family. Part of the 50S ribosomal subunit. Contacts protein L32.

The polypeptide is Large ribosomal subunit protein bL17 (Trichormus variabilis (strain ATCC 29413 / PCC 7937) (Anabaena variabilis)).